A 447-amino-acid polypeptide reads, in one-letter code: Glutamate--tRNA ligase 1 (447 aa).

A 'HIGH' region motif is present at residues 10–20 (PSPTGMLHVGN). A 'KMSKS' region motif is present at residues 240 to 244 (KISKR). An ATP-binding site is contributed by lysine 243.

Belongs to the class-I aminoacyl-tRNA synthetase family. Glutamate--tRNA ligase type 1 subfamily. In terms of assembly, monomer.

Its subcellular location is the cytoplasm. It catalyses the reaction tRNA(Glu) + L-glutamate + ATP = L-glutamyl-tRNA(Glu) + AMP + diphosphate. Catalyzes the attachment of glutamate to tRNA(Glu) in a two-step reaction: glutamate is first activated by ATP to form Glu-AMP and then transferred to the acceptor end of tRNA(Glu). This chain is Glutamate--tRNA ligase 1, found in Rickettsia prowazekii (strain Madrid E).